Here is a 347-residue protein sequence, read N- to C-terminus: RNA 3'-terminal phosphate cyclase (347 aa).

ATP contacts are provided by residues glutamine 101 and 286–289 (HMAD). Histidine 312 acts as the Tele-AMP-histidine intermediate in catalysis.

Belongs to the RNA 3'-terminal cyclase family. Type 1 subfamily.

Its subcellular location is the cytoplasm. The enzyme catalyses a 3'-end 3'-phospho-ribonucleotide-RNA + ATP = a 3'-end 2',3'-cyclophospho-ribonucleotide-RNA + AMP + diphosphate. Catalyzes the conversion of 3'-phosphate to a 2',3'-cyclic phosphodiester at the end of RNA. The mechanism of action of the enzyme occurs in 3 steps: (A) adenylation of the enzyme by ATP; (B) transfer of adenylate to an RNA-N3'P to produce RNA-N3'PP5'A; (C) and attack of the adjacent 2'-hydroxyl on the 3'-phosphorus in the diester linkage to produce the cyclic end product. The biological role of this enzyme is unknown but it is likely to function in some aspects of cellular RNA processing. The protein is RNA 3'-terminal phosphate cyclase of Pyrobaculum neutrophilum (strain DSM 2338 / JCM 9278 / NBRC 100436 / V24Sta) (Thermoproteus neutrophilus).